The sequence spans 154 residues: Prefoldin subunit alpha (154 aa).

Residues 92-102 are compositionally biased toward polar residues; that stretch reads DNAVESLSTKQ. Residues 92–154 are disordered; it reads DNAVESLSTK…MQDQQPEDNE (63 aa). The segment covering 103–114 has biased composition (basic and acidic residues); it reads DALDNRIESLRD. Residues 128 to 148 show a composition bias toward low complexity; the sequence is QQAQQMQQQMQQQQMQQMQDQ.

It belongs to the prefoldin subunit alpha family. In terms of assembly, heterohexamer of two alpha and four beta subunits.

Its subcellular location is the cytoplasm. Molecular chaperone capable of stabilizing a range of proteins. Seems to fulfill an ATP-independent, HSP70-like function in archaeal de novo protein folding. The polypeptide is Prefoldin subunit alpha (Haloquadratum walsbyi (strain DSM 16790 / HBSQ001)).